We begin with the raw amino-acid sequence, 223 residues long: Thymidylate kinase (223 aa).

Residue 7-14 (GIDGAGKS) coordinates ATP.

The protein belongs to the thymidylate kinase family.

It catalyses the reaction dTMP + ATP = dTDP + ADP. In terms of biological role, phosphorylation of dTMP to form dTDP in both de novo and salvage pathways of dTTP synthesis. The sequence is that of Thymidylate kinase from Prosthecochloris aestuarii (strain DSM 271 / SK 413).